A 266-amino-acid polypeptide reads, in one-letter code: Glutamate racemase 1 (266 aa).

Substrate contacts are provided by residues 11-12 (DS) and 43-44 (YG). The active-site Proton donor/acceptor is C74. 75–76 (NT) contacts substrate. C182 (proton donor/acceptor) is an active-site residue. 183 to 184 (TH) provides a ligand contact to substrate.

This sequence belongs to the aspartate/glutamate racemases family.

The enzyme catalyses L-glutamate = D-glutamate. It functions in the pathway cell wall biogenesis; peptidoglycan biosynthesis. In terms of biological role, provides the (R)-glutamate required for cell wall biosynthesis. The sequence is that of Glutamate racemase 1 from Caldanaerobacter subterraneus subsp. tengcongensis (strain DSM 15242 / JCM 11007 / NBRC 100824 / MB4) (Thermoanaerobacter tengcongensis).